The following is a 308-amino-acid chain: Olfactory receptor 5H8 (308 aa).

The Extracellular segment spans residues 1–28; sequence MDDENATLLTEFVLTGLTYQSEWKIPLF. The chain crosses the membrane as a helical span at residues 29–49; the sequence is LAFLVIYLITIMANLGLIAVI. Residues 50–56 lie on the Cytoplasmic side of the membrane; it reads WKDSHLH. A helical membrane pass occupies residues 57 to 77; it reads IPMYLFLGSLAFVDAWLSSSV. At 78–98 the chain is on the extracellular side; it reads TPKMLISFLAKSMIISVSECK. A disulfide bridge connects residues Cys97 and Cys179. Residues 99 to 119 traverse the membrane as a helical segment; the sequence is IQFFSFGISGTTECFLLATMA. At 120–133 the chain is on the cytoplasmic side; it reads YDRYVAICKPLLYP. A helical transmembrane segment spans residues 134–154; sequence VIMTNGLCIWLLVLSFIGGFL. Residues 155–195 are Extracellular-facing; it reads HALIHEGILFRLTFCNSNIIHHFYCDIIPLLKISCTDPSIN. A helical membrane pass occupies residues 196–216; it reads FLMLFILSGSIQVFTILTVLV. Over 217-238 the chain is Cytoplasmic; sequence SYTFVLFTILKKKAKDIRKAFS. The helical transmembrane segment at 239–259 threads the bilayer; the sequence is TCGAHLLSVSLYYGPLLFMYV. At 260-270 the chain is on the extracellular side; the sequence is HPASPQADDQD. Residues 271–291 traverse the membrane as a helical segment; the sequence is MVESLFYTVIIPFLNPIIYSL. Residues 292-308 are Cytoplasmic-facing; that stretch reads RNKQVIDSLTKTLKGNV.

The protein belongs to the G-protein coupled receptor 1 family.

The protein localises to the cell membrane. Its function is as follows. Odorant receptor. The chain is Olfactory receptor 5H8 from Homo sapiens (Human).